The primary structure comprises 507 residues: Polygalacturonase (507 aa).

The signal sequence occupies residues 1-20; sequence MSMKFMAALAFLALQLIVMA. The propeptide occupies 21–54; sequence AGEDQSAQIMLDSDTKQYHRSSRNLRKRVHHARH. PbH1 repeat units follow at residues 215-241, 242-263, 265-285, 295-316, 324-345, and 358-385; these read CDGVKIQGIKIKAPRDSPNTDGIDIFA, SKRFEIEKCTIGTGDDCVAVGT, SSNITIKDLTCGPGHGMSIGS, VSFVHLDGAKFIDTQNGLRIKT, ASHITYENVEMINAENPILINQ, and RSAVKIQDVTFKNIHGTSATTAAIQLMC. The Proton donor role is filled by Asp-256. Asn-267 is a glycosylation site (N-linked (GlcNAc...) asparagine). His-279 is an active-site residue.

The protein belongs to the glycosyl hydrolase 28 family.

The protein localises to the secreted. It localises to the cell wall. It catalyses the reaction (1,4-alpha-D-galacturonosyl)n+m + H2O = (1,4-alpha-D-galacturonosyl)n + (1,4-alpha-D-galacturonosyl)m.. This chain is Polygalacturonase (JNA2), found in Juniperus ashei (Ozark white cedar).